The primary structure comprises 904 residues: UPF0182 protein CKL_0015 (904 aa).

7 consecutive transmembrane segments (helical) span residues 9-29 (SLIVILFVCILFLNKIVDFII), 47-67 (LIAICKLMIPLFIIIYISIVL), 96-116 (IFIIVNLIVSFLFSYAFAATY), 157-177 (ILSLIIFLGLITLVTYFTLSV), 208-228 (LAVLAALVMICVSIGYILKCI), 253-273 (YKIIAAASIISAVIIFISILV), and 279-299 (IIVSITVIVALILIKSLSYTV).

It belongs to the UPF0182 family.

Its subcellular location is the cell membrane. This Clostridium kluyveri (strain ATCC 8527 / DSM 555 / NBRC 12016 / NCIMB 10680 / K1) protein is UPF0182 protein CKL_0015.